A 185-amino-acid polypeptide reads, in one-letter code: uncharacterized protein (185 aa).

The N-terminal stretch at 1–18 is a signal peptide; that stretch reads MLLKLILILCFLVTLSLS. Residues 30-185 form a disordered region; sequence TQGPTIASGG…VQDCGEITGW (156 aa). Residues 86-101 are compositionally biased toward basic and acidic residues; it reads RAQEGGKKDTTKEQPK. The segment covering 103–116 has biased composition (low complexity); sequence NNNNKNLGRHSSSG. The segment covering 117–135 has biased composition (gly residues); it reads SGSGSGSGCGVTGDTGTGS.

It is found in the secreted. This is an uncharacterized protein from Dictyostelium discoideum (Social amoeba).